A 121-amino-acid chain; its full sequence is MKVLLGLLLGYSVLILAHELPDLPRTQHPPKSELSYWCTYVPQCDFCWDCQDGICKNKITESRFIDSNHSIVNCRVFRNSMTQSCLYEISSKMPNHFSMECLHPRPYTGNEIFMRTWGGGG.

The first 17 residues, 1 to 17, serve as a signal peptide directing secretion; that stretch reads MKVLLGLLLGYSVLILA.

The protein belongs to the asfivirus MGF 110 family.

The sequence is that of Protein MGF 110-14L from African swine fever virus (isolate Portugal/Lis 57/1957) (ASFV).